A 152-amino-acid chain; its full sequence is Small ribosomal subunit protein uS9 (152 aa).

This sequence belongs to the universal ribosomal protein uS9 family.

The sequence is that of Small ribosomal subunit protein uS9 from Mycobacterium ulcerans (strain Agy99).